The primary structure comprises 327 residues: uncharacterized protein (327 aa).

The segment at 129-306 (TPLQNQEATT…DNKKTVTTSS (178 aa)) is disordered. Over residues 130 to 144 (PLQNQEATTSPTIES) the composition is skewed to polar residues. Composition is skewed to basic and acidic residues over residues 184 to 196 (KSVE…DRNV) and 233 to 276 (TKDE…EKIV).

This is an uncharacterized protein from Caenorhabditis elegans.